The chain runs to 393 residues: Endoplasmic reticulum junction formation protein lunapark-A (393 aa).

Topologically, residues 1-45 (MGAVVSRWRAKPSTVEVLEGLDKDIQVLEEYREKNHKQLKLWVYR) are cytoplasmic. Residues 46 to 66 (LLLYSALLYLMACAVVYAWYI) traverse the membrane as a helical segment. Topologically, residues 67-69 (PER) are lumenal. The chain crosses the membrane as a helical span at residues 70–90 (MIGKLIVASPFLLFPLLIWLL). Residues 91–393 (RKLLIILYNK…EQDVSAMEVE (303 aa)) lie on the Cytoplasmic side of the membrane. A coiled-coil region spans residues 95 to 130 (IILYNKRTERNNEKLEELKAEKKKILEQVMETETYK). A disordered region spans residues 146 to 209 (KLELETQPIG…PPEKGLSAST (64 aa)). A compositionally biased stretch (pro residues) spans 176-190 (TGRPPPVPVPGPSVP). The C4-type; plays a role in ER morphology zinc finger occupies 269 to 294 (CQQCLSHNGMALKEEFEYIAFRCAYC). The segment at 314-393 (AAEAKTSQDP…EQDVSAMEVE (80 aa)) is disordered. Basic and acidic residues-rich tracts occupy residues 340 to 353 (ESKEAGPEPVKAGD) and 364 to 383 (EEMKPGDPEPHTDIPDKSDG).

The protein belongs to the lunapark family. In terms of assembly, homodimer; homodimerization requires the C4-type zinc finger motif and decreases during mitosis in a phosphorylation-dependent manner. Phosphorylated. Phosphorylation occurs during interphase. Phosphorylation also occurs during mitosis; these phosphorylations reduce both its homodimerization and the ER three-way tubular junction formation.

It is found in the endoplasmic reticulum membrane. Functionally, endoplasmic reticulum (ER)-shaping membrane protein that plays a role in determining ER morphology. Involved in the stabilization of nascent three-way ER tubular junctions within the ER network. May also play a role as a curvature-stabilizing protein within three-way ER tubular junction network. The chain is Endoplasmic reticulum junction formation protein lunapark-A (lnpka) from Danio rerio (Zebrafish).